Consider the following 343-residue polypeptide: Fc receptor-like protein 1 (343 aa).

A signal peptide spans 1-16 (MLPWLLLLICALPCEP). 2 Ig-like C2-type domains span residues 17 to 109 (AGIS…VSIH) and 117 to 200 (PVLT…EVVA). Over 17 to 219 (AGISDVSLKT…PTENGISHLS (203 aa)) the chain is Extracellular. An N-linked (GlcNAc...) asparagine glycan is attached at Asn51. A disulfide bond links Cys138 and Cys185. Asn202 is a glycosylation site (N-linked (GlcNAc...) asparagine). Residues 220-240 (LGLTGWLLGCLSPITMALIFC) form a helical membrane-spanning segment. Over 241–343 (YWLKRKIGRQ…IAHMDYEDAM (103 aa)) the chain is Cytoplasmic. A disordered region spans residues 251–278 (SEDPVRSPPQTVLQGSTYPKSPDSRQPE). Positions 258–269 (PPQTVLQGSTYP) are enriched in polar residues. 3 consecutive short sequence motifs (ITIM motif) follow at residues 266–271 (STYPKS), 279–284 (PLYENV), and 291–296 (EVYSLV). Tyr281 bears the Phosphotyrosine mark. Residue Tyr297 is modified to Phosphotyrosine. Short sequence motifs (ITIM motif) lie at residues 325-330 (GLYSKP) and 337-342 (MDYEDA).

As to quaternary structure, interacts with ABL1. Interacts with GRB2 and SOS1. Interacts with SHIP-1/INPP5D. Phosphorylated on C-terminal region upon BCR ligation leading to recruitment of ABL1. In terms of tissue distribution, widely expressed. Expressed in B-cells at the various stages of differentiation.

It is found in the cell membrane. Functionally, may function as an activating coreceptor in B-cells. May function in B-cells activation and differentiation. The sequence is that of Fc receptor-like protein 1 (Fcrl1) from Mus musculus (Mouse).